A 221-amino-acid chain; its full sequence is Hydrogenase expression/formation protein HupD (221 aa).

Ni(2+)-binding residues include E20, D66, and H97.

This sequence belongs to the peptidase A31 family.

In terms of biological role, not known. Could be involved in the processing of hydrogenase. The protein is Hydrogenase expression/formation protein HupD (hupD) of Thiocapsa roseopersicina.